The chain runs to 144 residues: Large ribosomal subunit protein uL16 (144 aa).

It belongs to the universal ribosomal protein uL16 family. As to quaternary structure, part of the 50S ribosomal subunit.

Its function is as follows. Binds 23S rRNA and is also seen to make contacts with the A and possibly P site tRNAs. The chain is Large ribosomal subunit protein uL16 from Heliobacterium modesticaldum (strain ATCC 51547 / Ice1).